The chain runs to 430 residues: Glutamine synthetase, chloroplastic/mitochondrial (430 aa).

The transit peptide at 1-45 (MAQILAASPTCQMRVPKHSSVIASSSKLWSSVVLKQKKQSNNKVR) directs the protein to the chloroplast and mitochondrion. A GS beta-grasp domain is found at 77–157 (IIAEYIWIGG…VICDTWTPAG (81 aa)). The segment at 97–122 (TIEKPVEDPSELPKWNYDGSSTGQAP) is disordered. Ser106 carries the phosphoserine modification. Residues 161-430 (PTNKRAKAAE…LAAQKLSLNV (270 aa)) form the GS catalytic domain.

This sequence belongs to the glutamine synthetase family. Homooctamer. As to expression, expressed in mesophyll and epidermal cells of leaves.

The protein resides in the plastid. The protein localises to the chloroplast. It localises to the mitochondrion. The enzyme catalyses L-glutamate + NH4(+) + ATP = L-glutamine + ADP + phosphate + H(+). Functionally, the light-modulated chloroplast/mitochondrial enzyme, encoded by a nuclear gene and expressed primarily in leaves, is responsible for the reassimilation of the ammonia generated by photorespiration. In Arabidopsis thaliana (Mouse-ear cress), this protein is Glutamine synthetase, chloroplastic/mitochondrial (GLN2).